Consider the following 180-residue polypeptide: Transcription factor HES-7.1-A (180 aa).

The region spanning 13–70 is the bHLH domain; the sequence is HRKLLKPLVEKRRRERINNSLEKLRIFLFQTLKSEKLKNPKVEKAEILECTVQFLQSR. Positions 84–116 constitute an Orange domain; the sequence is YQSGFQHCLETTLHFMNSKPDMNGVTKELLSHQ. The WRPW motif signature appears at 176-179; sequence WRPW.

In terms of assembly, transcription repression requires formation of a complex with a corepressor protein of the Groucho/TLE family. In terms of tissue distribution, expressed in the presumptive midbrain-hindbrain boundary (MHB) as early as the early gastrula stage (stage 10.5). Expression in the MHB continues through to tailbud stage. Also transiently expressed in the eye anlage at late neurula stage.

It is found in the nucleus. Functionally, transcriptional repressor. Represses transcription from both N box- and E box-containing promoters. Demarcates the prospective midbrain-hindbrain boundary (MHB) region in the neuroectoderm in early gastrulae embryos by repressing transcription of a number of target genes. The polypeptide is Transcription factor HES-7.1-A (hes7.1-a) (Xenopus laevis (African clawed frog)).